Reading from the N-terminus, the 297-residue chain is Ribosomal RNA small subunit methyltransferase H (297 aa).

S-adenosyl-L-methionine contacts are provided by residues 30 to 32 (GGY), aspartate 48, phenylalanine 75, aspartate 96, and glutamine 103.

This sequence belongs to the methyltransferase superfamily. RsmH family.

The protein localises to the cytoplasm. The catalysed reaction is cytidine(1402) in 16S rRNA + S-adenosyl-L-methionine = N(4)-methylcytidine(1402) in 16S rRNA + S-adenosyl-L-homocysteine + H(+). In terms of biological role, specifically methylates the N4 position of cytidine in position 1402 (C1402) of 16S rRNA. This Ehrlichia chaffeensis (strain ATCC CRL-10679 / Arkansas) protein is Ribosomal RNA small subunit methyltransferase H.